We begin with the raw amino-acid sequence, 155 residues long: Ribosomal RNA large subunit methyltransferase H (155 aa).

Residues leucine 72, glycine 103, and 122–127 (LSDLTL) contribute to the S-adenosyl-L-methionine site.

The protein belongs to the RNA methyltransferase RlmH family. In terms of assembly, homodimer.

It localises to the cytoplasm. The enzyme catalyses pseudouridine(1915) in 23S rRNA + S-adenosyl-L-methionine = N(3)-methylpseudouridine(1915) in 23S rRNA + S-adenosyl-L-homocysteine + H(+). Its function is as follows. Specifically methylates the pseudouridine at position 1915 (m3Psi1915) in 23S rRNA. This chain is Ribosomal RNA large subunit methyltransferase H, found in Acidovorax ebreus (strain TPSY) (Diaphorobacter sp. (strain TPSY)).